A 905-amino-acid polypeptide reads, in one-letter code: Nitrate reductase [NADPH] (905 aa).

Positions 1-42 (METSTTTTLLQQERIPENSEPISTHIHTHSLPPTPPGTAKPS) are disordered. C179 contacts Mo-molybdopterin. One can recognise a Cytochrome b5 heme-binding domain in the interval 546–621 (NRKITIEELK…LPTYHIGTLD (76 aa)). Residues H581 and H604 each contribute to the heme site. Positions 648–759 (KTWSKAILDK…KGPTGKFVYH (112 aa)) constitute an FAD-binding FR-type domain. FAD-binding positions include 702 to 705 (RSYT), 719 to 723 (LIKIY), 733 to 735 (VMT), S783, and T786. An NADP(+)-binding site is contributed by 875-884 (LLLVCGPPPM).

The protein belongs to the nitrate reductase family. Homodimer. FAD serves as cofactor. Heme is required as a cofactor. Requires Mo-molybdopterin as cofactor.

It carries out the reaction nitrite + NADP(+) + H2O = nitrate + NADPH + H(+). In terms of biological role, nitrate reductase is a key enzyme involved in the first step of nitrate assimilation in plants, fungi and bacteria. This Fusarium oxysporum (Fusarium vascular wilt) protein is Nitrate reductase [NADPH] (NIA).